The chain runs to 932 residues: LPS-assembly protein LptD (932 aa).

The signal sequence occupies residues 1-33 (MALKSPAFRRKFPLLVTGGLLALQPLATSYAVA). Positions 54–87 (PVNNLPPRPVHEGAAVSSGTEAASEGETADRPML) are disordered.

The protein belongs to the LptD family. Component of the lipopolysaccharide transport and assembly complex. Interacts with LptE and LptA.

The protein resides in the cell outer membrane. Functionally, together with LptE, is involved in the assembly of lipopolysaccharide (LPS) at the surface of the outer membrane. This is LPS-assembly protein LptD from Pseudomonas putida (strain GB-1).